A 178-amino-acid chain; its full sequence is Single-stranded DNA-binding protein 2 (178 aa).

Positions 6 to 111 constitute an SSB domain; sequence VNKVILVGNL…VVVSQSGTMQ (106 aa). The DNA-binding element occupies 55 to 61; sequence WHRVVLY. A disordered region spans residues 111–161; sequence QMLGGRNSAGSGQQQGGWGQPQQPAAPSHSGMPPQQHPANEPPMDFDDDIP.

In terms of assembly, homotetramer.

The sequence is that of Single-stranded DNA-binding protein 2 (ssb2) from Salmonella typhi.